We begin with the raw amino-acid sequence, 39 residues long: Potassium channel toxin alpha-KTx 2.5 (39 aa).

3 disulfide bridges follow: Cys-7–Cys-29, Cys-13–Cys-34, and Cys-17–Cys-36.

It belongs to the short scorpion toxin superfamily. Potassium channel inhibitor family. Alpha-KTx 02 subfamily. In terms of tissue distribution, expressed by the venom gland.

The protein resides in the secreted. Functionally, potent selective inhibitor of Kv1.1/KCNA1, Kv1.2/KCNA2, Kv1.3/KCNA3 voltage-gated potassium channels. Weak inhibitor of Kv1.6/KCNA6 potassium channel. It also shows a weak interaction with nicotinic acetylcholine receptors (nAChR), suggesting it may weakly inhibit it. In Centruroides limbatus (Bark scorpion), this protein is Potassium channel toxin alpha-KTx 2.5.